Here is a 181-residue protein sequence, read N- to C-terminus: Small ribosomal subunit protein uS4 (181 aa).

The region spanning 108–177 is the S4 RNA-binding domain; that stretch reads RRLQTMVYRQ…EGHPEIERIN (70 aa). Positions 161 to 181 are disordered; the sequence is GTSPLTSEGHPEIERINKKRR. Basic and acidic residues predominate over residues 169–181; that stretch reads GHPEIERINKKRR.

The protein belongs to the universal ribosomal protein uS4 family. In terms of assembly, part of the 30S ribosomal subunit. Contacts protein S5. The interaction surface between S4 and S5 is involved in control of translational fidelity.

In terms of biological role, one of the primary rRNA binding proteins, it binds directly to 16S rRNA where it nucleates assembly of the body of the 30S subunit. Functionally, with S5 and S12 plays an important role in translational accuracy. The chain is Small ribosomal subunit protein uS4 from Methanosphaerula palustris (strain ATCC BAA-1556 / DSM 19958 / E1-9c).